We begin with the raw amino-acid sequence, 100 residues long: NADH-quinone oxidoreductase subunit K 1 (100 aa).

3 consecutive transmembrane segments (helical) span residues 3–23 (IIKA…LGVI), 28–48 (LITV…ALVA), and 60–80 (IFAF…LGLI).

It belongs to the complex I subunit 4L family. As to quaternary structure, NDH-1 is composed of 14 different subunits. Subunits NuoA, H, J, K, L, M, N constitute the membrane sector of the complex.

It localises to the cell inner membrane. The catalysed reaction is a quinone + NADH + 5 H(+)(in) = a quinol + NAD(+) + 4 H(+)(out). In terms of biological role, NDH-1 shuttles electrons from NADH, via FMN and iron-sulfur (Fe-S) centers, to quinones in the respiratory chain. The immediate electron acceptor for the enzyme in this species is believed to be ubiquinone. Couples the redox reaction to proton translocation (for every two electrons transferred, four hydrogen ions are translocated across the cytoplasmic membrane), and thus conserves the redox energy in a proton gradient. The chain is NADH-quinone oxidoreductase subunit K 1 from Aquifex aeolicus (strain VF5).